Reading from the N-terminus, the 83-residue chain is Small ribosomal subunit protein bS18 (83 aa).

Belongs to the bacterial ribosomal protein bS18 family. In terms of assembly, part of the 30S ribosomal subunit. Forms a tight heterodimer with protein bS6.

Binds as a heterodimer with protein bS6 to the central domain of the 16S rRNA, where it helps stabilize the platform of the 30S subunit. This is Small ribosomal subunit protein bS18 from Methylobacterium radiotolerans (strain ATCC 27329 / DSM 1819 / JCM 2831 / NBRC 15690 / NCIMB 10815 / 0-1).